The following is a 234-amino-acid chain: Leucyl/phenylalanyl-tRNA--protein transferase (234 aa).

It belongs to the L/F-transferase family.

It is found in the cytoplasm. It carries out the reaction N-terminal L-lysyl-[protein] + L-leucyl-tRNA(Leu) = N-terminal L-leucyl-L-lysyl-[protein] + tRNA(Leu) + H(+). The catalysed reaction is N-terminal L-arginyl-[protein] + L-leucyl-tRNA(Leu) = N-terminal L-leucyl-L-arginyl-[protein] + tRNA(Leu) + H(+). It catalyses the reaction L-phenylalanyl-tRNA(Phe) + an N-terminal L-alpha-aminoacyl-[protein] = an N-terminal L-phenylalanyl-L-alpha-aminoacyl-[protein] + tRNA(Phe). Functionally, functions in the N-end rule pathway of protein degradation where it conjugates Leu, Phe and, less efficiently, Met from aminoacyl-tRNAs to the N-termini of proteins containing an N-terminal arginine or lysine. The polypeptide is Leucyl/phenylalanyl-tRNA--protein transferase (Escherichia coli O7:K1 (strain IAI39 / ExPEC)).